The following is a 335-amino-acid chain: tRNA N6-adenosine threonylcarbamoyltransferase (335 aa).

Residues His109, His113, and Tyr130 each contribute to the a divalent metal cation site. Residues Tyr130 to Gly134, Asp162, Gly177, Glu181, and Asn266 each bind substrate. Asp294 serves as a coordination point for a divalent metal cation.

This sequence belongs to the KAE1 / TsaD family. In terms of assembly, component of the EKC/KEOPS complex composed of at least GON7, TP53RK, TPRKB, OSGEP and LAGE3; the whole complex dimerizes. Interacts with PRAME. A divalent metal cation serves as cofactor. Widely expressed at low level. Expressed in heart, placenta, liver, kidney, lung, brain, skeletal muscle and pancreas.

It localises to the cytoplasm. The protein resides in the nucleus. The enzyme catalyses L-threonylcarbamoyladenylate + adenosine(37) in tRNA = N(6)-L-threonylcarbamoyladenosine(37) in tRNA + AMP + H(+). Its function is as follows. Component of the EKC/KEOPS complex that is required for the formation of a threonylcarbamoyl group on adenosine at position 37 (t(6)A37) in tRNAs that read codons beginning with adenine. The complex is probably involved in the transfer of the threonylcarbamoyl moiety of threonylcarbamoyl-AMP (TC-AMP) to the N6 group of A37. OSGEP likely plays a direct catalytic role in this reaction, but requires other protein(s) of the complex to fulfill this activity. The polypeptide is tRNA N6-adenosine threonylcarbamoyltransferase (Homo sapiens (Human)).